A 690-amino-acid chain; its full sequence is Polyphosphate kinase (690 aa).

ATP is bound at residue Asn-45. 2 residues coordinate Mg(2+): Arg-375 and Arg-405. The Phosphohistidine intermediate role is filled by His-435. 3 residues coordinate ATP: Tyr-468, Arg-564, and His-592.

The protein belongs to the polyphosphate kinase 1 (PPK1) family. The cofactor is Mg(2+). In terms of processing, an intermediate of this reaction is the autophosphorylated ppk in which a phosphate is covalently linked to a histidine residue through a N-P bond.

It carries out the reaction [phosphate](n) + ATP = [phosphate](n+1) + ADP. Functionally, catalyzes the reversible transfer of the terminal phosphate of ATP to form a long-chain polyphosphate (polyP). This Pseudomonas aeruginosa (strain ATCC 15692 / DSM 22644 / CIP 104116 / JCM 14847 / LMG 12228 / 1C / PRS 101 / PAO1) protein is Polyphosphate kinase.